The following is a 120-amino-acid chain: Hydrogenase maturation factor HypA (120 aa).

Residue histidine 2 participates in Ni(2+) binding. Zn(2+) contacts are provided by cysteine 73, histidine 76, cysteine 89, and cysteine 92.

This sequence belongs to the HypA/HybF family.

Its function is as follows. Involved in the maturation of [NiFe] hydrogenases. Required for nickel insertion into the metal center of the hydrogenase. This chain is Hydrogenase maturation factor HypA, found in Deinococcus radiodurans (strain ATCC 13939 / DSM 20539 / JCM 16871 / CCUG 27074 / LMG 4051 / NBRC 15346 / NCIMB 9279 / VKM B-1422 / R1).